Consider the following 248-residue polypeptide: Probable phosphatase VFMJ11_A0091 (248 aa).

Zn(2+) is bound by residues His8, His10, His16, His41, Glu74, His102, His132, Asp194, and His196.

This sequence belongs to the PHP family. Requires Zn(2+) as cofactor.

The protein is Probable phosphatase VFMJ11_A0091 of Aliivibrio fischeri (strain MJ11) (Vibrio fischeri).